A 475-amino-acid chain; its full sequence is Rho GTPase-activating protein 15 (475 aa).

A compositionally biased stretch (polar residues) spans 1-22 (MQKSTNSDTSVETLNSTRQGTG). Positions 1–23 (MQKSTNSDTSVETLNSTRQGTGA) are disordered. S43, S103, S196, S199, and S243 each carry phosphoserine. A PH domain is found at 79–189 (MVEKEGYLQK…WFHAIKNAID (111 aa)). The Rho-GAP domain occupies 281-470 (SHLHKVCERE…LMLSEYSKIF (190 aa)).

Expressed in lung, liver and lymphoid cells.

It localises to the cytoplasm. It is found in the membrane. GTPase activator for the Rho-type GTPases by converting them to an inactive GDP-bound state. Has activity toward RAC1. Overexpression results in an increase in actin stress fibers and cell contraction. The protein is Rho GTPase-activating protein 15 (ARHGAP15) of Homo sapiens (Human).